We begin with the raw amino-acid sequence, 666 residues long: tRNA 5-methylaminomethyl-2-thiouridine biosynthesis bifunctional protein MnmC (666 aa).

Residues 1–245 form a tRNA (mnm(5)s(2)U34)-methyltransferase region; that stretch reads MKQYAIQPAT…KREMLCGVME (245 aa). The tract at residues 270–666 is FAD-dependent cmnm(5)s(2)U34 oxidoreductase; sequence IGGGIASALL…RKLLKGKAVK (397 aa).

This sequence in the N-terminal section; belongs to the methyltransferase superfamily. tRNA (mnm(5)s(2)U34)-methyltransferase family. In the C-terminal section; belongs to the DAO family. FAD is required as a cofactor.

The protein resides in the cytoplasm. It catalyses the reaction 5-aminomethyl-2-thiouridine(34) in tRNA + S-adenosyl-L-methionine = 5-methylaminomethyl-2-thiouridine(34) in tRNA + S-adenosyl-L-homocysteine + H(+). Catalyzes the last two steps in the biosynthesis of 5-methylaminomethyl-2-thiouridine (mnm(5)s(2)U) at the wobble position (U34) in tRNA. Catalyzes the FAD-dependent demodification of cmnm(5)s(2)U34 to nm(5)s(2)U34, followed by the transfer of a methyl group from S-adenosyl-L-methionine to nm(5)s(2)U34, to form mnm(5)s(2)U34. In Salmonella choleraesuis (strain SC-B67), this protein is tRNA 5-methylaminomethyl-2-thiouridine biosynthesis bifunctional protein MnmC.